The primary structure comprises 133 residues: Small ribosomal subunit protein uS8 (133 aa).

Residues 1 to 29 are disordered; sequence MANHDPISDMLTRIRNASEKRHETTRIPA. The segment covering 16 to 25 has biased composition (basic and acidic residues); sequence NASEKRHETT.

This sequence belongs to the universal ribosomal protein uS8 family. Part of the 30S ribosomal subunit. Contacts proteins S5 and S12.

Functionally, one of the primary rRNA binding proteins, it binds directly to 16S rRNA central domain where it helps coordinate assembly of the platform of the 30S subunit. The polypeptide is Small ribosomal subunit protein uS8 (Prochlorococcus marinus (strain MIT 9211)).